The following is a 402-amino-acid chain: Putative neuropeptide Y receptor 11 (402 aa).

Over 1-45 (MGSVNESCDNYVEIFNKINYFFRDDQVINGTEYSPKEFGYFITFA) the chain is Extracellular. N-linked (GlcNAc...) asparagine glycosylation is found at Asn-5 and Asn-29. The helical transmembrane segment at 46-66 (YMLIILFGAIGNFLTIIVVIL) threads the bilayer. The Cytoplasmic portion of the chain corresponds to 67–85 (NPAMRTTRNFFILNLALSD). A helical membrane pass occupies residues 86–106 (FFVCIVTAPTTLYTVLYMFWP). The Extracellular portion of the chain corresponds to 107–122 (FSRTLCKIAGSLQGFN). A disulfide bridge connects residues Cys-112 and Cys-194. The chain crosses the membrane as a helical span at residues 123-143 (IFLSTFSIASIAVDRYVLIIF). Over 144 to 152 (PTKRERQQN) the chain is Cytoplasmic. The helical transmembrane segment at 153-173 (LSFCFFIMIWVISLILAVPLL) threads the bilayer. At 174–210 (QASDLTPVFVEPSCDLALYICHEQNEIWEKMIISKGT) the chain is on the extracellular side. The helical transmembrane segment at 211-231 (YTLAVLITQYAFPLFSLVFAY) threads the bilayer. Residues 232-272 (SRIAHRMKLRFANRNQNVTTNTNTSQRRRSVVERQRRTHLL) are Cytoplasmic-facing. The helical transmembrane segment at 273–293 (LVCVVAVFAVAWLPLNVFHIF) threads the bilayer. Over 294–306 (NTFELVNSFSVTT) the chain is Extracellular. A helical membrane pass occupies residues 307-328 (FSICHCLAMCSACLNPLIYAFF). Over 329 to 402 (NHNFRIEFMH…LSAMEQDEQL (74 aa)) the chain is Cytoplasmic.

The protein belongs to the G-protein coupled receptor 1 family.

It is found in the cell membrane. In terms of biological role, could be a receptor for neuropeptide Y and peptide YY. The sequence is that of Putative neuropeptide Y receptor 11 (npr-11) from Caenorhabditis elegans.